A 127-amino-acid chain; its full sequence is Small ribosomal subunit protein uS11 (127 aa).

Belongs to the universal ribosomal protein uS11 family. As to quaternary structure, part of the 30S ribosomal subunit.

Functionally, located on the platform of the 30S subunit. This Picrophilus torridus (strain ATCC 700027 / DSM 9790 / JCM 10055 / NBRC 100828 / KAW 2/3) protein is Small ribosomal subunit protein uS11.